The chain runs to 640 residues: MARGGGAAGVSMAHHLGIALVVLVFAAMAQVARGGGGGHDYGMALSKSILYFEAQRSGVLPGSQRIAWRANSGLADGKANGVDLVGGYYDAGDNVKFGLPMAFTVTMMAWSVIEYGEEMAAAGELGHAVEAIKWGTDYFAKAHPEPNVLYAEVGDGDSDHNCWQRPEDMTTSRQAYRLDPQNPGSDLAGETAAAMAAASLVFRSSNPGYADQLLQHSKQLFDFADKYRGRYDNSITVARNYYGSFSGYGDELLWASAWLYQASDDRRYLDYLANNADALGGTGWSINQFGWDVKYPGVQILAAKFLLQGKAGEHAGVLQGYRRKADFFACSCLGKDAADNVGRTPGGMLYHQRWNNIQFVTSASFLLAVYSDHLAGGAVRCSGGGGAVAGAAELLAFAKSQVDYILGSNPRGTSYMVGYGAVYPRQAHHRGSSIASIRASPSFVSCREGYASWYGRRGGNPNLLDGAVVGGPDEHDDFADERNNYEQTEAATYNNAPLMGILARLAAGHGARARGRLGQSLQHGIAANHTSLPHGANHQHASPVEIEQKATASWEKDGRTYHRYAVTVSNRSPAGGKTVEELHIGIGKLYGPVWGLEKAARYGYVLPSWTPSLPAGESAAFVYVHAAPPADVWVTGYKLV.

The N-terminal stretch at 1 to 34 (MARGGGAAGVSMAHHLGIALVVLVFAAMAQVARG) is a signal peptide. Asp93 serves as the catalytic Nucleophile. Residues His428, Asp480, and Glu489 contribute to the active site. A propeptide spans 512–640 (RARGRLGQSL…DVWVTGYKLV (129 aa)) (removed in mature form). Asn528 carries N-linked (GlcNAc...) asparagine glycosylation.

This sequence belongs to the glycosyl hydrolase 9 (cellulase E) family. In terms of tissue distribution, expressed in roots and flowers.

Its subcellular location is the secreted. The enzyme catalyses Endohydrolysis of (1-&gt;4)-beta-D-glucosidic linkages in cellulose, lichenin and cereal beta-D-glucans.. In terms of biological role, hydrolyzes 1,4-beta-glycosyl linkages of 1,4-beta-glucans and 1,3-1,4-beta-glucans. Possesses broad substrate specificity for hemicelluloses of type II cell walls. Substrate preference is carboxymethyl-cellulose &gt; 1,3-1,4-beta-glucan &gt; lichenan &gt; arabinoxylan &gt; phospho-swollen cellulose &gt; xylan &gt; glucomannan. May participate in lateral root development. The chain is Endoglucanase 2 (GLU5) from Oryza sativa subsp. japonica (Rice).